Here is a 157-residue protein sequence, read N- to C-terminus: MIEINVYYKKWYSTIKKPKIFVKNVIKSSLINLNIYEYKPIISIVLANNILLQKLNYEYRNKNKPTNVLSFPYDKLNKKCNLGEIFLSLDTLIQESIDLNIPIEHHTCHMLIHGLLHILDYNHEEPLMQYIMESIEIKLLDKLGIRNPYVSRETIYP.

3 residues coordinate Zn(2+): H113, H117, and H123.

This sequence belongs to the endoribonuclease YbeY family. Requires Zn(2+) as cofactor.

The protein localises to the cytoplasm. Its function is as follows. Single strand-specific metallo-endoribonuclease involved in late-stage 70S ribosome quality control and in maturation of the 3' terminus of the 16S rRNA. In Ehrlichia ruminantium (strain Welgevonden), this protein is Endoribonuclease YbeY.